We begin with the raw amino-acid sequence, 338 residues long: HLA class I histocompatibility antigen, alpha chain G (338 aa).

The N-terminal stretch at 1 to 24 (MVVMAPRTLFLLLSGALTLTETWA) is a signal peptide. The segment at 3–11 (VMAPRTLFL) is VL9 epitope. The tract at residues 25–114 (GSHSMRYFSA…LRGYYNQSEA (90 aa)) is alpha-1. Residues 25 to 308 (GSHSMRYFSA…KQSSLPTIPI (284 aa)) are Extracellular-facing. Residues Tyr-31, His-94, Asn-101, and Tyr-108 each contribute to the a peptide antigen site. Asn-110 carries N-linked (GlcNAc...) asparagine glycosylation. An alpha-2 region spans residues 115–206 (SSHTLQWMIG…ENGKEMLQRA (92 aa)). Cys-125 and Cys-188 are disulfide-bonded. A peptide antigen is bound by residues Ser-167, Lys-170, Gln-179, Arg-180, Tyr-183, and Tyr-195. The tract at residues 207 to 298 (DPPKTHVTHH…GLPEPLMLRW (92 aa)) is alpha-3. Residues 209–299 (PKTHVTHHPV…LPEPLMLRWK (91 aa)) form the Ig-like C1-type domain. A disulfide bond links Cys-227 and Cys-283. Positions 299 to 308 (KQSSLPTIPI) are connecting peptide. A helical transmembrane segment spans residues 309 to 332 (MGIVAGLVVLAAVVTGAAVAAVLW). The Cytoplasmic portion of the chain corresponds to 333 to 338 (RKKSSD). Residues 334–336 (KKS) carry the ER-retrieval signal motif.

This sequence belongs to the MHC class I family. In terms of assembly, forms a heterotrimer with B2M and a self-peptide (peptide-bound HLA-G-B2M). HLA-G-B2M complex interacts with components of the antigen processing machinery TAPBP and TAP1-TAP2 complex; this interaction is required for loading of high affinity peptides and heterotrimer translocation to the cell surface. Interacts with CALCR; this interaction is required for appropriate folding. Interacts with COPB1; this interaction mediates the endoplasmic reticulum (ER) retrieval of HLA-G-B2M complexes that bind low affinity peptides. On the cell surface, peptide-bound HLA-G-B2M molecules (referred to as monomers) can form disulfide-linked homomultimers, homodimers and homotrimers. Interacts with KIR2DL4; this interaction is direct. Interacts with LILRB1 and LILRB2 receptors; this interaction is direct. Interacts with CD160; this interactions is direct. Interacts with CD8A homodimer; this interaction is direct and might down-regulate T cell receptor signaling. Isoform 2: Forms a non-disulfide-linked homodimer and interacts with LILRB2. In terms of processing, N-glycosylated. Produced by proteolytic cleavage at the cell surface (shedding) by matrix metalloproteinase MMP2. Expressed in adult eye. Expressed in immune cell subsets including monocytes, myeloid and plasmacytoid dendritic cells and regulatory T cells (Tr1)(at protein level). Secreted by follicular dendritic cell and follicular helper T cells. As to expression, detected in physiological fluids including amniotic fluid and serum. In terms of tissue distribution, expressed in placenta, amniotic membrane, skin, cord blood and peripheral blood mononuclear cells.

It localises to the cell membrane. Its subcellular location is the endoplasmic reticulum membrane. It is found in the early endosome membrane. The protein localises to the secreted. The protein resides in the early endosome. It localises to the cell projection. Its subcellular location is the filopodium membrane. In terms of biological role, non-classical major histocompatibility class Ib molecule involved in immune regulatory processes at the maternal-fetal interface. In complex with B2M/beta-2 microglobulin binds a limited repertoire of nonamer self-peptides derived from intracellular proteins including histones and ribosomal proteins. Peptide-bound HLA-G-B2M complex acts as a ligand for inhibitory/activating KIR2DL4, LILRB1 and LILRB2 receptors on uterine immune cells to promote fetal development while maintaining maternal-fetal tolerance. Upon interaction with KIR2DL4 and LILRB1 receptors on decidual NK cells, it triggers NK cell senescence-associated secretory phenotype as a molecular switch to promote vascular remodeling and fetal growth in early pregnancy. Through interaction with KIR2DL4 receptor on decidual macrophages induces pro-inflammatory cytokine production mainly associated with tissue remodeling. Through interaction with LILRB2 receptor triggers differentiation of type 1 regulatory T cells and myeloid-derived suppressor cells, both of which actively maintain maternal-fetal tolerance. May play a role in balancing tolerance and antiviral-immunity at maternal-fetal interface by keeping in check the effector functions of NK, CD8+ T cells and B cells. Reprograms B cells toward an immune suppressive phenotype via LILRB1. May induce immune activation/suppression via intercellular membrane transfer (trogocytosis), likely enabling interaction with KIR2DL4, which resides mostly in endosomes. Through interaction with the inhibitory receptor CD160 on endothelial cells may control angiogenesis in immune privileged sites. Functionally, likely does not bind B2M and presents peptides. Negatively regulates NK cell- and CD8+ T cell-mediated cytotoxicity. Its function is as follows. Non-classical major histocompatibility class Ib molecule involved in immune regulatory processes at the maternal-fetal interface. In complex with B2M/beta-2 microglobulin binds a limited repertoire of nonamer self-peptides derived from intracellular proteins including histones and ribosomal proteins. Peptide-bound HLA-G-B2M complex acts as a ligand for inhibitory/activating KIR2DL4, LILRB1 and LILRB2 receptors on uterine immune cells to promote fetal development while maintaining maternal-fetal tolerance. Upon interaction with KIR2DL4 and LILRB1 receptors on decidual NK cells, it triggers NK cell senescence-associated secretory phenotype as a molecular switch to promote vascular remodeling and fetal growth in early pregnancy. Through interaction with KIR2DL4 receptor on decidual macrophages induces pro-inflammatory cytokine production mainly associated with tissue remodeling. Through interaction with LILRB2 receptor triggers differentiation of type 1 regulatory T cells and myeloid-derived suppressor cells, both of which actively maintain maternal-fetal tolerance. Reprograms B cells toward an immune suppressive phenotype via LILRB1. Likely does not bind B2M and presents peptides. This Homo sapiens (Human) protein is HLA class I histocompatibility antigen, alpha chain G.